Consider the following 382-residue polypeptide: MQDAAPRLTFTLRDEERLMMKIGVFVPIGNNGWLISTHAPQYMPTFELNKAIVQKAEHYHFDFALSMIKLRGFGGKTEFWDHNLESFTLMAGLAAVTSRIQIYATAATLTLPPAIVARMAATIDSISGGRFGVNLVTGWQKPEYEQMGIWPGDDYFSRRYDYLTEYVQVLRDLWGTGKSDFKGDFFTMNDCRVSPQPSVPMKVICAGQSDAGMAFSAQYADFNFCFGKGVNTPTAFAPTAARMKQAAEQSGRDVGSYVLFMVIADETDDAARAKWEHYKAGADEEALSWLTEQSQKDTRSGTDTNVRQMADPTSAVNINMGTLVGSYASVARMLDEVASVPGAEGVLLTFDDFLSGIETFGERIQPLMQCRAHLPALTQEVA.

FMN-binding positions include 68–69 (IK), asparagine 134, glutamate 143, 159–160 (RY), and serine 209.

This sequence belongs to the NtaA/SnaA/DszA monooxygenase family. RutA subfamily.

It carries out the reaction uracil + FMNH2 + NADH + O2 = (Z)-3-ureidoacrylate + FMN + NAD(+) + H2O + H(+). It catalyses the reaction thymine + FMNH2 + NADH + O2 = (Z)-2-methylureidoacrylate + FMN + NAD(+) + H2O + H(+). Its function is as follows. Catalyzes the pyrimidine ring opening between N-3 and C-4 by an unusual flavin hydroperoxide-catalyzed mechanism, adding oxygen atoms in the process to yield ureidoacrylate peracid, that immediately reacts with FMN forming ureidoacrylate and FMN-N(5)-oxide. The FMN-N(5)-oxide reacts spontaneously with NADH to produce FMN. Requires the flavin reductase RutF to regenerate FMN in vivo. In Escherichia coli (strain SE11), this protein is Pyrimidine monooxygenase RutA.